The primary structure comprises 177 residues: Probable inosine/xanthosine triphosphatase (177 aa).

The protein belongs to the YjjX NTPase family. Homodimer. Requires Mg(2+) as cofactor. The cofactor is Mn(2+).

The catalysed reaction is XTP + H2O = XDP + phosphate + H(+). It catalyses the reaction ITP + H2O = IDP + phosphate + H(+). Its function is as follows. Phosphatase that hydrolyzes non-canonical purine nucleotides such as XTP and ITP to their respective diphosphate derivatives. Probably excludes non-canonical purines from DNA/RNA precursor pool, thus preventing their incorporation into DNA/RNA and avoiding chromosomal lesions. The polypeptide is Probable inosine/xanthosine triphosphatase (Pyrobaculum islandicum (strain DSM 4184 / JCM 9189 / GEO3)).